A 502-amino-acid chain; its full sequence is MSIKAEEISALIKQQIENYQSEIKVSDVGTVIQVGDGIARAHGLDNVMAGELVEFSNGVMGMAQNLEENNVGIIILGPYTEIREGDEVRRTGRIMEVPVGEQLIGRVVNSLGQPVDGLGPVETTKTRPIEGAAPGVMDRKSVHEPLQTGIKAIDALVPIGRGQRELIIGDRQTGKTSVAIDTILNQKDQDMVCIYVAIGQKESTVRNVVETLRKHGALDYTIVVTASASQPAPLLFLAPYAGVTMGEEFMYNGKHVLVIYDDLTKQASAYRELSLLLRRPPGREAYPGDVFYLHSRLLERAAKLSDAKGGGSLTALPFIETQAGDVSAYIPTNVISITDGQIFLQSDLFFSGVRPAINAGLSVSRVGGSAQIKAMKKVAGTLRLDLASYRELESFAQFGSDLDQATQAKLNRGARTVEILKQGLHKPLRVEKQVAVLYALTKGFLDDVPVSDITRFEDEYLTWLESNRKEVLESIRTTGGLPEAGLFESALEEFKKTFIASE.

169–176 (GDRQTGKT) provides a ligand contact to ATP.

This sequence belongs to the ATPase alpha/beta chains family. In terms of assembly, F-type ATPases have 2 components, CF(1) - the catalytic core - and CF(0) - the membrane proton channel. CF(1) has five subunits: alpha(3), beta(3), gamma(1), delta(1), epsilon(1). CF(0) has three main subunits: a(1), b(2) and c(9-12). The alpha and beta chains form an alternating ring which encloses part of the gamma chain. CF(1) is attached to CF(0) by a central stalk formed by the gamma and epsilon chains, while a peripheral stalk is formed by the delta and b chains.

It is found in the cell membrane. It catalyses the reaction ATP + H2O + 4 H(+)(in) = ADP + phosphate + 5 H(+)(out). In terms of biological role, produces ATP from ADP in the presence of a proton gradient across the membrane. The alpha chain is a regulatory subunit. This chain is ATP synthase subunit alpha, found in Priestia megaterium (strain ATCC 12872 / QMB1551) (Bacillus megaterium).